The chain runs to 188 residues: dCTP deaminase (188 aa).

DCTP is bound by residues 111–116, 135–137, Gln-156, Tyr-170, and Gln-180; these read KSTYAR and TLE. The active-site Proton donor/acceptor is Glu-137.

This sequence belongs to the dCTP deaminase family. As to quaternary structure, homotrimer.

The enzyme catalyses dCTP + H2O + H(+) = dUTP + NH4(+). It participates in pyrimidine metabolism; dUMP biosynthesis; dUMP from dCTP (dUTP route): step 1/2. Catalyzes the deamination of dCTP to dUTP. The sequence is that of dCTP deaminase from Pseudomonas putida (strain W619).